We begin with the raw amino-acid sequence, 1271 residues long: Probable WRKY transcription factor protein 1 (1271 aa).

Residues Met1–Tyr12 show a composition bias toward polar residues. 3 disordered regions span residues Met1 to Arg138, Asn204 to Gly312, and Asn370 to Ser515. Residues Leu9–Asn71 are a coiled coil. Composition is skewed to low complexity over residues Asn13–Asn103, Ile116–Asn135, Asn204–Asn216, and Ser223–Asn259. The segment covering Asn260–Glu274 has biased composition (acidic residues). Positions Ser297–Gly312 are enriched in polar residues. A coiled-coil region spans residues Lys320–Asn372. Over residues Asn370 to Thr388 the composition is skewed to low complexity. Positions Asn413–Phe442 are enriched in acidic residues. Residues Glu443–Lys458 show a composition bias toward low complexity. Over residues Glu475 to Asn487 the composition is skewed to basic and acidic residues. Polar residues predominate over residues Gln488–Ser515. Positions Leu520–Glu574 form a coiled coil. Basic and acidic residues predominate over residues Asn578–Pro587. Disordered stretches follow at residues Asn578–Leu650 and Ser667–Asn811. The segment covering Asn610–Asn642 has biased composition (low complexity). Residues Asn672 to Ala702 show a composition bias toward polar residues. Composition is skewed to low complexity over residues Thr703–Pro715, Asn725–Asn766, and Asn774–Asn811. The stretch at Asn766 to Asn786 forms a coiled coil. Residues Asn808–Pro872 constitute a DNA-binding region (WRKY 1). Zn(2+)-binding residues include Cys839, Cys844, His867, and His869. The segment at Phe890 to Gly1095 is disordered. The segment covering Gly895–Gly918 has biased composition (low complexity). Residues Asn919 to Asn937 are compositionally biased toward gly residues. Residues Ser938–Ser956 show a composition bias toward low complexity. Positions Pro957–Met966 are enriched in polar residues. A compositionally biased stretch (low complexity) spans Asn967 to Lys995. Positions Ser998 to Thr1010 are enriched in basic and acidic residues. A compositionally biased stretch (acidic residues) spans Thr1011–Asp1021. The stretch at Asp1013–Asn1040 forms a coiled coil. A compositionally biased stretch (low complexity) spans Asn1025–Asn1085. Positions Ser1105 to Pro1167 form a DNA-binding region, WRKY 2. Zn(2+) contacts are provided by Cys1136, Cys1141, His1162, and His1164. The interval Asn1180–Asn1210 is disordered. The segment covering Asn1184–Asn1210 has biased composition (low complexity).

Belongs to the WRKY group I family.

The protein localises to the nucleus. In terms of biological role, probable transcription factor. Interacts specifically with the W box (5'-(T)TGAC[CT]-3'), a frequently occurring elicitor-responsive cis-acting element. The sequence is that of Probable WRKY transcription factor protein 1 (wrky1) from Dictyostelium discoideum (Social amoeba).